The following is a 631-amino-acid chain: Phosphomethylpyrimidine synthase (631 aa).

Substrate is bound by residues Asn239, Met268, Tyr297, His333, 353–355, 394–397, and Glu433; these read SRG and DGLR. His437 is a Zn(2+) binding site. Tyr460 is a substrate binding site. Residue His501 participates in Zn(2+) binding. 3 residues coordinate [4Fe-4S] cluster: Cys581, Cys584, and Cys589.

This sequence belongs to the ThiC family. Homodimer. [4Fe-4S] cluster serves as cofactor.

The enzyme catalyses 5-amino-1-(5-phospho-beta-D-ribosyl)imidazole + S-adenosyl-L-methionine = 4-amino-2-methyl-5-(phosphooxymethyl)pyrimidine + CO + 5'-deoxyadenosine + formate + L-methionine + 3 H(+). Its pathway is cofactor biosynthesis; thiamine diphosphate biosynthesis. In terms of biological role, catalyzes the synthesis of the hydroxymethylpyrimidine phosphate (HMP-P) moiety of thiamine from aminoimidazole ribotide (AIR) in a radical S-adenosyl-L-methionine (SAM)-dependent reaction. This Salmonella paratyphi B (strain ATCC BAA-1250 / SPB7) protein is Phosphomethylpyrimidine synthase.